We begin with the raw amino-acid sequence, 177 residues long: MSRVAKAPVSIPAGVEVTLNGQEITVKGGKGTLTRVINSAVAVTVEDGAIKFAPVEGVVNAWAQAGTARALINNMVVGVSQGFEKKLQLVGVGYRAKVAGSDVDLSLGFSHPLVHKLPAGVTAECPSQTEIVLRSIDKELVGQVAAEIRGYRPPEPYKGKGVRYANEEVRRKEAKKK.

Belongs to the universal ribosomal protein uL6 family. As to quaternary structure, part of the 50S ribosomal subunit.

In terms of biological role, this protein binds to the 23S rRNA, and is important in its secondary structure. It is located near the subunit interface in the base of the L7/L12 stalk, and near the tRNA binding site of the peptidyltransferase center. In Shewanella amazonensis (strain ATCC BAA-1098 / SB2B), this protein is Large ribosomal subunit protein uL6.